The following is a 435-amino-acid chain: tRNA modification GTPase MnmE (435 aa).

Arg20, Glu77, and Lys117 together coordinate (6S)-5-formyl-5,6,7,8-tetrahydrofolate. One can recognise a TrmE-type G domain in the interval 214–359; it reads GFKIVIVGAP…FMKELESFCL (146 aa). Residues 224 to 229, 243 to 249, and 268 to 271 contribute to the GTP site; these read NSGKSS, TEEAGTT, and DTAG. The Mg(2+) site is built by Ser228 and Thr249. Position 435 (Lys435) interacts with (6S)-5-formyl-5,6,7,8-tetrahydrofolate.

Belongs to the TRAFAC class TrmE-Era-EngA-EngB-Septin-like GTPase superfamily. TrmE GTPase family. In terms of assembly, homodimer. Heterotetramer of two MnmE and two MnmG subunits. K(+) is required as a cofactor.

It is found in the cytoplasm. Exhibits a very high intrinsic GTPase hydrolysis rate. Involved in the addition of a carboxymethylaminomethyl (cmnm) group at the wobble position (U34) of certain tRNAs, forming tRNA-cmnm(5)s(2)U34. This Bartonella henselae (strain ATCC 49882 / DSM 28221 / CCUG 30454 / Houston 1) (Rochalimaea henselae) protein is tRNA modification GTPase MnmE.